The following is a 691-amino-acid chain: Protein simr-1 (691 aa).

Residues 139-204 (EAEITPGTIY…TLFHLGKFTI (66 aa)) form the Tudor; degenerate domain. Disordered stretches follow at residues 547–573 (TGPC…DMSI) and 588–618 (DNLN…TTNS). Polar residues-rich tracts occupy residues 549–573 (PCGS…DMSI) and 588–598 (DNLNDTENWPN).

The protein localises to the cytoplasm. The protein resides in the perinuclear region. Its function is as follows. Acts downstream of piRNA production to promote mediator complex-dependent endogenous siRNA biogenesis from piRNA-target mRNAs in the RNA interference pathway in germ cells. Not required to identify target mRNA by the piRNA pathway. Plays a role in both spermatogenesis and oogenesis and in maintaining fertility over multiple generations, probably by directing mutator-dependent silencing to piRNA-targeted genes. The sequence is that of Protein simr-1 from Caenorhabditis elegans.